The following is a 333-amino-acid chain: UDP-N-acetylglucosamine--N-acetylmuramyl-(pentapeptide) pyrophosphoryl-undecaprenol N-acetylglucosamine transferase (333 aa).

UDP-N-acetyl-alpha-D-glucosamine-binding positions include 10–12 (TGG), N124, S177, and Q275.

Belongs to the glycosyltransferase 28 family. MurG subfamily.

It localises to the cell inner membrane. The enzyme catalyses di-trans,octa-cis-undecaprenyl diphospho-N-acetyl-alpha-D-muramoyl-L-alanyl-D-glutamyl-meso-2,6-diaminopimeloyl-D-alanyl-D-alanine + UDP-N-acetyl-alpha-D-glucosamine = di-trans,octa-cis-undecaprenyl diphospho-[N-acetyl-alpha-D-glucosaminyl-(1-&gt;4)]-N-acetyl-alpha-D-muramoyl-L-alanyl-D-glutamyl-meso-2,6-diaminopimeloyl-D-alanyl-D-alanine + UDP + H(+). The protein operates within cell wall biogenesis; peptidoglycan biosynthesis. Its function is as follows. Cell wall formation. Catalyzes the transfer of a GlcNAc subunit on undecaprenyl-pyrophosphoryl-MurNAc-pentapeptide (lipid intermediate I) to form undecaprenyl-pyrophosphoryl-MurNAc-(pentapeptide)GlcNAc (lipid intermediate II). The protein is UDP-N-acetylglucosamine--N-acetylmuramyl-(pentapeptide) pyrophosphoryl-undecaprenol N-acetylglucosamine transferase of Nitratiruptor sp. (strain SB155-2).